The following is a 263-amino-acid chain: MAKSLVLSSLLLALLLAAPLASLADNNVLLTGDVLHTDNQLSFESAAFVMQGDCNLVLYNEAGGFQSNTHGRGVGCTLTLNNLGQLEIHSANSNTPVWVSPRNINTVQGNYAAVLGPDQHVTIYGPAIWSTPAPNRHERRATVSDIPRVRNVLFSSQVMSDNAQLATRDYSLVMRDDCNLALTKGGQTNIVWESGTSGRGQHCFMRLGHTGLIEISDDRLNSVWRSNTVGQEGDYVLILQINGQAVVYGPAVWSTASSASAAL.

A signal peptide spans 1–24 (MAKSLVLSSLLLALLLAAPLASLA). Bulb-type lectin domains are found at residues 26–136 (NNVL…APNR) and 150–260 (RNVL…SSAS). 2 disulfides stabilise this stretch: C54–C76 and C178–C203.

In terms of assembly, heterotetramer of 2 domain 1 and 2 domain 2 chains arranged as a dimer of domain 1/domain 2 heterodimers.

Functionally, mannose-specific lectin. Has weak agglutinating activity towards trypsin-treated erythrocytes from rabbit but not from human. The sequence is that of Mannose-specific lectin 2 from Crocus vernus (Dutch crocus).